Consider the following 217-residue polypeptide: UPF0502 protein Sfri_1696 (217 aa).

It belongs to the UPF0502 family.

In Shewanella frigidimarina (strain NCIMB 400), this protein is UPF0502 protein Sfri_1696.